We begin with the raw amino-acid sequence, 671 residues long: Probable potassium transport system protein Kup (671 aa).

Residues Met1–His43 are disordered. Residues Pro10–Gly37 are compositionally biased toward low complexity. 12 helical membrane-spanning segments follow: residues Leu52–Leu72, Val92–Met112, Leu147–Ile167, Pro181–Phe201, Val209–Val229, Gly255–Leu275, Trp291–Leu311, Leu323–Val343, Ile381–Phe401, Leu407–His427, Ala441–Val461, and Asp465–Lys485.

It belongs to the HAK/KUP transporter (TC 2.A.72) family.

The protein localises to the cell inner membrane. The enzyme catalyses K(+)(in) + H(+)(in) = K(+)(out) + H(+)(out). Functionally, transport of potassium into the cell. Likely operates as a K(+):H(+) symporter. The sequence is that of Probable potassium transport system protein Kup from Anaeromyxobacter dehalogenans (strain 2CP-1 / ATCC BAA-258).